Here is a 180-residue protein sequence, read N- to C-terminus: MRFYYTLLATAAALLVHSDALSAAAETSLNQLTAVDGTTTTSQRFLRRHTDSETTDNEERLNSGPIVLDTAKKIDDLFEVEKLDKILDPKMADKFLDGKTFFGWLDKSALDEALNGNIAQKTKVFEHWREKRLRPKALTKVLTTDPAVRKKYKFVYEMYDSYIKYVARKKLSGLKRNRGD.

A signal peptide spans 1 to 24 (MRFYYTLLATAAALLVHSDALSAA). The RxLR-dEER motif lies at 44–60 (RFLRRHTDSETTDNEER).

Belongs to the RxLR effector family.

It is found in the secreted. The protein resides in the host cell. Functionally, secreted effector that partially suppresses elicitor-induced cell death in host and enhances virulence of P.parasitica. The chain is Secreted RxLR effector protein 5 from Phytophthora nicotianae (Potato buckeye rot agent).